We begin with the raw amino-acid sequence, 1370 residues long: Histidine kinase P4 (1370 aa).

The first 20 residues, 1 to 20 (MRNIGVFSVILFSFLAISLK), serve as a signal peptide directing secretion. The helical transmembrane segment at 799 to 819 (WAFCLYALCIGTALIALISFL) threads the bilayer. Residues 852–1072 (NISHEFRTPL…IFRVSLPLGR (221 aa)) form the Histidine kinase domain. Histidine 855 is subject to Phosphohistidine; by autocatalysis. A Response regulatory domain is found at 1119–1234 (TILIVEDHKP…EFRLRIKNIL (116 aa)). 4-aspartylphosphate is present on aspartate 1167. Positions 1266–1365 (KKAFKIVEDN…NETPSQYQNR (100 aa)) constitute an HTH araC/xylS-type domain. 2 DNA-binding regions (H-T-H motif) span residues 1284–1305 (LAFS…KAWT) and 1332–1355 (ISQI…QKKF).

Post-translationally, autophosphorylated. Activation requires a sequential transfer of a phosphate group from a His in the primary transmitter domain, to an Asp in the receiver domain and to a His in the secondary transmitter domain.

The protein resides in the membrane. It localises to the cell surface. The catalysed reaction is ATP + protein L-histidine = ADP + protein N-phospho-L-histidine.. Its function is as follows. Histidine kinase probably involved in ulvan degradation. Ulvan is the main polysaccharide component of the Ulvales (green seaweed) cell wall. It is composed of disaccharide building blocks comprising 3-sulfated rhamnose (Rha3S) linked to D-glucuronic acid (GlcA), L-iduronic acid (IduA), or D-xylose (Xyl). This chain is Histidine kinase P4, found in Formosa agariphila (strain DSM 15362 / KCTC 12365 / LMG 23005 / KMM 3901 / M-2Alg 35-1).